A 316-amino-acid chain; its full sequence is Cobalamin biosynthesis protein CobD (316 aa).

5 helical membrane passes run 45–65, 78–100, 151–171, 209–229, and 291–311; these read FSPYLFGFFLWLTTVGLALGV, PVLYWLVWIYLAYASLAAKSLAF, DGVIGPLLCLFLGGPILAMTY, LTWLFLILSSQILLLDVKGAL, and ISLLYTSTMTGLILFTLFYLV.

It belongs to the CobD/CbiB family.

The protein localises to the cell membrane. It participates in cofactor biosynthesis; adenosylcobalamin biosynthesis. Converts cobyric acid to cobinamide by the addition of aminopropanol on the F carboxylic group. This chain is Cobalamin biosynthesis protein CobD, found in Streptococcus sanguinis (strain SK36).